Here is a 581-residue protein sequence, read N- to C-terminus: Sabinene synthase 1, chloroplastic (581 aa).

The N-terminal 28 residues, 1–28 (MPLNSLHNLERKPSKAWSTSCTAPAARL), are a transit peptide targeting the chloroplast. Residues arginine 297, aspartate 334, aspartate 338, arginine 475, and aspartate 478 each contribute to the (2E)-geranyl diphosphate site. Positions 334 and 338 each coordinate Mg(2+). Positions 334–338 (DDVYD) match the DDXXD motif motif. Aspartate 478, threonine 482, and glutamate 486 together coordinate Mg(2+).

It belongs to the terpene synthase family. Tpsb subfamily. Requires Mg(2+) as cofactor. Mn(2+) serves as cofactor.

Its subcellular location is the plastid. It is found in the chloroplast. The enzyme catalyses (2E)-geranyl diphosphate = sabinene + diphosphate. It catalyses the reaction (2E)-geranyl diphosphate = beta-myrcene + diphosphate. The protein operates within secondary metabolite biosynthesis; terpenoid biosynthesis. Functionally, monoterpene synthase (TPS) involved in the biosynthesis of monoterpene natural products, components of the chemical defense arsenal. Catalyzes the conversion of (2E)-geranyl diphosphate (GPP) into sabinene, and, as minor products, myrcene. This chain is Sabinene synthase 1, chloroplastic, found in Salvia pomifera (Apple sage).